The primary structure comprises 89 residues: Peroxidase (89 aa).

H52 is a heme binding site. Ca(2+)-binding residues include T53 and D68.

The cofactor is heme b. Ca(2+) is required as a cofactor.

The protein localises to the secreted. It carries out the reaction 2 a phenolic donor + H2O2 = 2 a phenolic radical donor + 2 H2O. In terms of biological role, removal of H(2)O(2), oxidation of toxic reductants, biosynthesis and degradation of lignin, suberization, auxin catabolism, response to environmental stresses such as wounding, pathogen attack and oxidative stress. These functions might be dependent on each isozyme/isoform in each plant tissue. Active against p-coumaryl alcohol, coniferyl alcohol and coniferyl aldehyde. In Ginkgo biloba (Ginkgo), this protein is Peroxidase.